We begin with the raw amino-acid sequence, 541 residues long: Atrial natriuretic peptide receptor 3 (541 aa).

An N-terminal signal peptide occupies residues 1–26; the sequence is MPSLLVLTFSPCVLLGWALLAGGTGG. Over 27 to 481 the chain is Extracellular; sequence GGVGGGGGGA…PCKSSGGLEE (455 aa). N-linked (GlcNAc...) (complex) asparagine glycosylation occurs at Asn86. Positions 106, 135, and 136 each coordinate chloride. Intrachain disulfides connect Cys108–Cys136 and Cys213–Cys261. Asn293 carries an N-linked (GlcNAc...) (high mannose) asparagine glycan. N-linked (GlcNAc...) (complex) asparagine glycosylation is present at Asn394. A helical membrane pass occupies residues 482 to 504; sequence SAVTGIVVGALLGAGLLMAFYFF. Residues 505 to 541 are Cytoplasmic-facing; it reads RKKYRITIERRTQQEESNLGKHRELREDSIRSHFSVA.

Belongs to the ANF receptor family. In terms of assembly, homodimer; disulfide-linked. Dimers can also be formed through the C-terminal cysteine of isoform 2. Interacts with OSTN.

The protein localises to the cell membrane. In terms of biological role, receptor for the natriuretic peptide hormones, binding with similar affinities atrial natriuretic peptide NPPA/ANP, brain natriuretic peptide NPPB/BNP, and C-type natriuretic peptide NPPC/CNP. May function as a clearance receptor for NPPA, NPPB and NPPC, regulating their local concentrations and effects. Acts as a regulator of osteoblast differentiation and bone growth by binding to its ligand osteocrin, thereby preventing binding between NPR3/NPR-C and natriuretic peptides, leading to increase cGMP production. In Homo sapiens (Human), this protein is Atrial natriuretic peptide receptor 3 (NPR3).